We begin with the raw amino-acid sequence, 519 residues long: Glucoamylase GLU1 (519 aa).

A signal peptide spans 1-27 (MKFGVLFSVFAAIVSALPLQEGPLNKR). N-linked (GlcNAc...) asparagine glycosylation is found at N115 and N127. W166 is a binding site for substrate. The N-linked (GlcNAc...) asparagine glycan is linked to N205. Catalysis depends on D234, which acts as the Proton acceptor. The Proton donor role is filled by E237.

The protein belongs to the glycosyl hydrolase 15 family.

It carries out the reaction Hydrolysis of terminal (1-&gt;4)-linked alpha-D-glucose residues successively from non-reducing ends of the chains with release of beta-D-glucose.. The polypeptide is Glucoamylase GLU1 (GLU1) (Saccharomycopsis fibuligera (Yeast)).